Consider the following 435-residue polypeptide: Protein translocase subunit SecY (435 aa).

Transmembrane regions (helical) follow at residues 19-39 (ILFTIFIILVFRIGTTITVPG), 68-88 (FSVFALGVSPYITASIVVQLL), 116-136 (YIALVLAFVQAIGITAGFDTL), 147-167 (VQTYALICVLLATGSMIVTWL), 179-199 (GVSMIIFAGIVSAIPDMIKGI), 216-236 (FIFVGILIVAVLLIIYFTTFV), 269-289 (VIPVIFASSITAAPAAIFQVV), 311-331 (ISGMFMYAFLIVLFTFFYTFV), 372-392 (VGSLFLGFISILPILAKDVFG), and 395-415 (DAVALGGTSLLIIISTGIEGM).

It belongs to the SecY/SEC61-alpha family. In terms of assembly, component of the Sec protein translocase complex. Heterotrimer consisting of SecY, SecE and SecG subunits. The heterotrimers can form oligomers, although 1 heterotrimer is thought to be able to translocate proteins. Interacts with the ribosome. Interacts with SecDF, and other proteins may be involved. Interacts with SecA.

It is found in the cell membrane. Functionally, the central subunit of the protein translocation channel SecYEG. Consists of two halves formed by TMs 1-5 and 6-10. These two domains form a lateral gate at the front which open onto the bilayer between TMs 2 and 7, and are clamped together by SecE at the back. The channel is closed by both a pore ring composed of hydrophobic SecY resides and a short helix (helix 2A) on the extracellular side of the membrane which forms a plug. The plug probably moves laterally to allow the channel to open. The ring and the pore may move independently. The chain is Protein translocase subunit SecY from Streptococcus sanguinis (strain SK36).